The sequence spans 503 residues: Proton-coupled zinc antiporter SLC30A1 (503 aa).

The Cytoplasmic portion of the chain corresponds to 1 to 10; the sequence is MGCWGRNRGR. The chain crosses the membrane as a helical span at residues 11 to 31; the sequence is LLCMLLLTFMFMVLEVVVSRV. Residues 32–35 are Extracellular-facing; the sequence is TASL. Residues 36–56 form a helical membrane-spanning segment; the sequence is AMLSDSFHMLSDVLALVVALV. Residues H43 and D47 each coordinate Zn(2+). Topologically, residues 57-78 are cytoplasmic; that stretch reads AERFARRTHATQKNTFGWIRAE. A helical transmembrane segment spans residues 79 to 99; sequence VMGALVNAIFLTGLCFAILLE. The Extracellular segment spans residues 100–113; sequence AVERFIEPHEMQQP. The helical transmembrane segment at 114 to 134 threads the bilayer; that stretch reads LVVLSVGVAGLLVNVLGLCLF. Topologically, residues 135-243 are cytoplasmic; sequence HHHSGEGQGA…RAGQLNMRGV (109 aa). A disordered region spans residues 140-213; that stretch reads EGQGAGHGHS…PEKLRSDDPV (74 aa). Residues 145–156 form a 6 X 2 AA approximate repeats of H-G region; it reads GHGHSHGHGHGH. Residues 147-165 show a composition bias toward basic residues; it reads GHSHGHGHGHLAKGARKAG. A compositionally biased stretch (polar residues) spans 184-196; the sequence is TNTLVANTSNSNG. Residues 200–211 are compositionally biased toward basic and acidic residues; the sequence is DQAEPEKLRSDD. Residues 244–264 form a helical membrane-spanning segment; that stretch reads FLHVLGDALGSVIVVVNALVF. Residues H246 and D250 each coordinate Zn(2+). Topologically, residues 265–303 are extracellular; sequence YFNWKGCTEDDFCTNPCFPDPCKSSVEIINSTQAPMRDA. N294 carries an N-linked (GlcNAc...) asparagine glycan. The helical transmembrane segment at 304 to 324 threads the bilayer; the sequence is GPCWVLYLDPTLCIIMVCILL. The Cytoplasmic segment spans residues 325 to 503; it reads YTTYPLLKES…VPNKQPESSL (179 aa). S502 carries the phosphoserine modification.

It belongs to the cation diffusion facilitator (CDF) transporter (TC 2.A.4) family. SLC30A subfamily. As to quaternary structure, homodimer. Interacts with TMEM163. Interacts and forms a complex with TMC6 and TMC8; the interaction regulates zinc transport into the ER. As to expression, widely expressed.

The protein resides in the cell membrane. Its subcellular location is the basolateral cell membrane. The protein localises to the cytoplasmic vesicle membrane. It localises to the cytoplasm. It is found in the endoplasmic reticulum membrane. The protein resides in the golgi apparatus membrane. Its subcellular location is the nucleus membrane. The catalysed reaction is Zn(2+)(in) + 2 H(+)(out) = Zn(2+)(out) + 2 H(+)(in). Functionally, zinc ion:proton antiporter that could function at the plasma membrane mediating zinc efflux from cells against its electrochemical gradient protecting them from intracellular zinc accumulation and toxicity. Alternatively, could prevent the transport to the plasma membrane of CACNB2, the L-type calcium channels regulatory subunit, through a yet to be defined mechanism. By modulating the expression of these channels at the plasma membrane, could prevent calcium and zinc influx into cells. By the same mechanism, could also prevent L-type calcium channels-mediated heavy metal influx into cells. In some cells, could also function as a zinc ion:proton antiporter mediating zinc entry into the lumen of cytoplasmic vesicles. In macrophages, can increase zinc ions concentration into the lumen of cytoplasmic vesicles containing engulfed bacteria and could help inactivate them. Forms a complex with TMC6/EVER1 and TMC8/EVER2 at the ER membrane of keratynocytes which facilitates zinc uptake into the ER. Down-regulates the activity of transcription factors induced by zinc and cytokines. This Mus musculus (Mouse) protein is Proton-coupled zinc antiporter SLC30A1.